The following is a 301-amino-acid chain: MPNAIHALVTESRNPFSTHIDQLSTLDMLAVINQEDQKVPFAIENVLPEIAQAVDAIAETFMKNGRLIYLGAGTSGRLGILDASECPPTFGTPHEQVVGLIAGGQQAILKAVENAEDDRSAGEQDLRNLALNEKDVVVGIAASGRTPYVLAGIEYANHVGCVTVGISCNPDSALAALANIAITPIVGPEVITGSSRMKAGTAQKLILNMLTTGAMIKTGKVFGNLMVDVVATNEKLVERQKNIVMEVTQCDRQQAEQALLQSNGQCKVAIVMLLLNMSAEEAKNCLAQANGFIHQALTLVK.

The SIS domain occupies 57 to 220; sequence IAETFMKNGR…TTGAMIKTGK (164 aa). Glu-85 serves as the catalytic Proton donor. The active site involves Glu-116.

It belongs to the GCKR-like family. MurNAc-6-P etherase subfamily. In terms of assembly, homodimer.

It carries out the reaction N-acetyl-D-muramate 6-phosphate + H2O = N-acetyl-D-glucosamine 6-phosphate + (R)-lactate. Its pathway is amino-sugar metabolism; 1,6-anhydro-N-acetylmuramate degradation. It participates in amino-sugar metabolism; N-acetylmuramate degradation. The protein operates within cell wall biogenesis; peptidoglycan recycling. Specifically catalyzes the cleavage of the D-lactyl ether substituent of MurNAc 6-phosphate, producing GlcNAc 6-phosphate and D-lactate. Together with AnmK, is also required for the utilization of anhydro-N-acetylmuramic acid (anhMurNAc) either imported from the medium or derived from its own cell wall murein, and thus plays a role in cell wall recycling. This chain is N-acetylmuramic acid 6-phosphate etherase, found in Pasteurella multocida (strain Pm70).